A 307-amino-acid chain; its full sequence is HPr kinase/phosphorylase (307 aa).

Residues H136 and K157 contribute to the active site. Residue 151–158 participates in ATP binding; it reads GESGIGKS. Residue S158 participates in Mg(2+) binding. D175 functions as the Proton acceptor; for phosphorylation activity. Proton donor; for dephosphorylation activity in the catalytic mechanism. Residues 198-207 form an important for the catalytic mechanism of both phosphorylation and dephosphorylation region; the sequence is LEVRGMGIID. E199 lines the Mg(2+) pocket. The active site involves R240. The interval 261 to 266 is important for the catalytic mechanism of dephosphorylation; that stretch reads PIRPGR.

The protein belongs to the HPrK/P family. Homohexamer. The cofactor is Mg(2+).

It catalyses the reaction [HPr protein]-L-serine + ATP = [HPr protein]-O-phospho-L-serine + ADP + H(+). It carries out the reaction [HPr protein]-O-phospho-L-serine + phosphate + H(+) = [HPr protein]-L-serine + diphosphate. Catalyzes the ATP- as well as the pyrophosphate-dependent phosphorylation of a specific serine residue in HPr, a phosphocarrier protein of the phosphoenolpyruvate-dependent sugar phosphotransferase system (PTS). HprK/P also catalyzes the pyrophosphate-producing, inorganic phosphate-dependent dephosphorylation (phosphorolysis) of seryl-phosphorylated HPr (P-Ser-HPr). The two antagonistic activities of HprK/P are regulated by several intracellular metabolites, which change their concentration in response to the absence or presence of rapidly metabolisable carbon sources (glucose, fructose, etc.) in the growth medium. Therefore, by controlling the phosphorylation state of HPr, HPrK/P is a sensor enzyme that plays a major role in the regulation of carbon metabolism and sugar transport: it mediates carbon catabolite repression (CCR), and regulates PTS-catalyzed carbohydrate uptake and inducer exclusion. The sequence is that of HPr kinase/phosphorylase from Clostridium novyi (strain NT).